Consider the following 92-residue polypeptide: MARSIWKGPFVRESLIKKVNKLIESGKSSVIKTWSRESAIIPLFVRFVFAVHNGNKFIPVVITEEMVGRKLGEFAPTRTFYGHAADRKVKRK.

The protein belongs to the universal ribosomal protein uS19 family.

Protein S19 forms a complex with S13 that binds strongly to the 16S ribosomal RNA. This Orientia tsutsugamushi (strain Boryong) (Rickettsia tsutsugamushi) protein is Small ribosomal subunit protein uS19.